A 921-amino-acid polypeptide reads, in one-letter code: cGMP-dependent 3',5'-cyclic phosphodiesterase (921 aa).

The residue at position 1 (methionine 1) is an N-acetylmethionine. Disordered regions lie at residues 1–21 (MRRQ…PPGS) and 177–198 (ESSV…DQKG). The span at 177-188 (ESSVAPEATQNP) shows a compositional bias: polar residues. 2 GAF domains span residues 220 to 357 (DASS…STVL) and 389 to 528 (DVSV…GISI). The 3',5'-cyclic GMP site is built by serine 411, aspartate 426, isoleucine 445, tyrosine 468, and threonine 479. The PDEase domain occupies 558–882 (SDDEYTKLLH…EHWTKVSHKF (325 aa)). Histidine 636 acts as the Proton donor in catalysis. Positions 640, 676, 677, and 788 each coordinate Zn(2+). Aspartate 677 is a binding site for Mg(2+).

It belongs to the cyclic nucleotide phosphodiesterase family. PDE2 subfamily. Homodimer. Requires Zn(2+) as cofactor. It depends on Mg(2+) as a cofactor.

The protein localises to the cell membrane. It is found in the cytoplasm. The protein resides in the mitochondrion. It localises to the mitochondrion inner membrane. Its subcellular location is the mitochondrion outer membrane. It carries out the reaction a nucleoside 3',5'-cyclic phosphate + H2O = a nucleoside 5'-phosphate + H(+). The catalysed reaction is 3',5'-cyclic GMP + H2O = GMP + H(+). It catalyses the reaction 3',5'-cyclic AMP + H2O = AMP + H(+). The 3',5'-cyclic-AMP phosphodiesterase activity is stimulated by 3',5'-cyclic GMP. Its function is as follows. cGMP-activated cyclic nucleotide phosphodiesterase with a dual-specificity for the second messengers cAMP and cGMP, which are key regulators of many important physiological processes. Has a higher efficiency with cGMP compared to cAMP. Plays a role in cell growth and migration. Regulates mitochondrial cAMP levels and respiration. Involved in the regulation of mitochondria morphology/dynamics and apoptotic cell death via local modulation of cAMP/PKA signaling in the mitochondrion, including the monitoring of local cAMP levels at the outer mitochondrial membrane and of PKA-dependent phosphorylation of DNM1L. This Bos taurus (Bovine) protein is cGMP-dependent 3',5'-cyclic phosphodiesterase.